Here is a 1293-residue protein sequence, read N- to C-terminus: Enterobactin synthase component F (1293 aa).

The segment at 1-301 (MSQHLPLVAA…NVLPLGIHIA (301 aa)) is elongation/condensation. The tract at residues 482 to 887 (SYREMREQVV…ALPDVEQAVT (406 aa)) is adenylation. A Carrier domain is found at 971–1046 (APKAGSETII…KLATIIDGEE (76 aa)). Ser-1006 is modified (O-(pantetheine 4'-phosphoryl)serine). Residues 1066–1293 (PTLFCFHPAS…GPIIRATLNR (228 aa)) form a thioesterase region. The active-site Proton acceptor; for thioesterase activity is the His-1271.

This sequence belongs to the ATP-dependent AMP-binding enzyme family. EntF subfamily. In terms of assembly, proteins EntB, EntD, EntE and EntF are the component of the enterobactin synthase. Components probably do not form a stable complex. EntF acts as a catalytic monomer. Requires pantetheine 4'-phosphate as cofactor. In terms of processing, 4'-phosphopantetheine is transferred from CoA to a specific serine of apo-EntF by EntD. Holo-EntF so formed is then acylated with seryl-AMP.

The protein resides in the cytoplasm. The enzyme catalyses 3 2,3-dihydroxybenzoate + 3 L-serine + 6 ATP = enterobactin + 6 AMP + 6 diphosphate + 4 H(+). It carries out the reaction holo-[peptidyl-carrier protein] + L-serine + ATP = L-seryl-[peptidyl-carrier protein] + AMP + diphosphate. It functions in the pathway siderophore biosynthesis; enterobactin biosynthesis. Its function is as follows. Involved in the biosynthesis of the siderophore enterobactin (enterochelin), which is a macrocyclic trimeric lactone of N-(2,3-dihydroxybenzoyl)-serine. EntF catalyzes the activation of L-serine via ATP-dependent PPi exchange reaction to form seryladenylate. Activated L-serine is loaded onto the peptidyl carrier domain via a thioester linkage to the phosphopanthetheine moiety, forming seryl-S-Ppant-EntF. EntF acts then as the sole catalyst for the formation of the three amide and three ester linkages found in enterobactin, using seryladenylate and 2,3-dihydroxybenzoate-S-Ppant-EntB (DHB-S-Ppant-EntB) as substrates, via the formation of a DHB-Ser-S-Ppant-EntF intermediate. The sequence is that of Enterobactin synthase component F (entF) from Escherichia coli O157:H7.